The sequence spans 316 residues: MLGFTEGIFLVLTVTEFILGNLVNGFIVSVNGSHWFKSKKISLSDFIITSLALFRIFLLWIIFTDSLIIVFSYHTHDSGIRMQLIDVFWTFTNHFSIWLISCLSVFYCLKIATFSHPSFLWLKWRASRVVVGMLWGALVLSCVCTMSLMNEFKIYSALTGSRDTQNMTEYIRLKRHEYNLMHVLGNLWKIPSLIVSLIAYFLLLLSLGKHTQQMQKYSVGSRDQSAEAHRRAMRIILSFLLFFLFYFLSFVILSSSRFLPETKIARIIGVVITMSYLVGDSLILILGNNKLKQTFVAILPCECGHPKPGSKRFFAS.

Topologically, residues 1 to 7 are extracellular; sequence MLGFTEG. The chain crosses the membrane as a helical span at residues 8 to 28; it reads IFLVLTVTEFILGNLVNGFIV. Residues 29 to 50 are Cytoplasmic-facing; sequence SVNGSHWFKSKKISLSDFIITS. The chain crosses the membrane as a helical span at residues 51-71; it reads LALFRIFLLWIIFTDSLIIVF. Residues 72–86 are Extracellular-facing; sequence SYHTHDSGIRMQLID. The chain crosses the membrane as a helical span at residues 87 to 107; the sequence is VFWTFTNHFSIWLISCLSVFY. Residues 108-128 are Cytoplasmic-facing; that stretch reads CLKIATFSHPSFLWLKWRASR. The chain crosses the membrane as a helical span at residues 129–149; the sequence is VVVGMLWGALVLSCVCTMSLM. Over 150–186 the chain is Extracellular; it reads NEFKIYSALTGSRDTQNMTEYIRLKRHEYNLMHVLGN. The N-linked (GlcNAc...) asparagine glycan is linked to Asn-166. The chain crosses the membrane as a helical span at residues 187 to 207; the sequence is LWKIPSLIVSLIAYFLLLLSL. The Cytoplasmic segment spans residues 208–234; sequence GKHTQQMQKYSVGSRDQSAEAHRRAMR. The chain crosses the membrane as a helical span at residues 235 to 255; it reads IILSFLLFFLFYFLSFVILSS. The Extracellular segment spans residues 256–266; it reads SRFLPETKIAR. A helical membrane pass occupies residues 267–287; the sequence is IIGVVITMSYLVGDSLILILG. Residues 288-316 are Cytoplasmic-facing; sequence NNKLKQTFVAILPCECGHPKPGSKRFFAS.

This sequence belongs to the G-protein coupled receptor T2R family.

The protein localises to the membrane. Gustducin-coupled receptor implicated in the perception of bitter compounds in the oral cavity and the gastrointestinal tract. Signals through PLCB2 and the calcium-regulated cation channel TRPM5. This chain is Taste receptor type 2 member 3, found in Rattus norvegicus (Rat).